A 238-amino-acid polypeptide reads, in one-letter code: Neuromodulin (238 aa).

The tract at residues 1-238 is disordered; it reads MLCCMRRTKQ…EEPEADQEHA (238 aa). S-palmitoyl cysteine attachment occurs at residues C3 and C4. Residues 9–32 show a composition bias toward basic and acidic residues; it reads KQVEKNDEDQKIEQDGIKPEDKAH. The IQ domain maps to 31-60; sequence AHKAATKIQASFRGHITRKKLKGEKKDDAQ. S41 bears the Phosphoserine; by PHK and PKC mark. Residues 54-83 are compositionally biased toward basic and acidic residues; that stretch reads EKKDDAQAAEAEANKKDEAPVADGVEKKGE. Over residues 84-95 the composition is skewed to low complexity; the sequence is GTTATEAAPATG. Basic and acidic residues predominate over residues 97–116; that stretch reads KPDEPGKAGETPSEEKKGEG. The span at 119–130 shows a compositional bias: low complexity; sequence ATEQAAPQAPAS. Polar residues predominate over residues 139 to 154; the sequence is ETESATKASTDNSPSS. Phosphoserine is present on residues S151, S153, and S154. Residues 155-167 show a composition bias toward basic and acidic residues; the sequence is KAEDAPAKEEPKQ. Positions 168-199 are enriched in low complexity; it reads ADVPAAVTAAAATTPAAEDAAAKATAQPPTET. Position 181 is a phosphothreonine (T181). S202 and S203 each carry phosphoserine; by CK2. The segment covering 213-225 has biased composition (basic and acidic residues); sequence DETKPKESARQDE. Acidic residues predominate over residues 226–238; it reads GKEEEPEADQEHA.

Belongs to the neuromodulin family. Identified in a complex containing FGFR4, NCAM1, CDH2, PLCG1, FRS2, SRC, SHC1, GAP43 and CTTN. Interacts (via IQ domain) with calmodulin. Binds calmodulin with a greater affinity in the absence of Ca(2+) than in its presence. Post-translationally, phosphorylated. Phosphorylation of this protein by a protein kinase C is specifically correlated with certain forms of synaptic plasticity. In terms of processing, palmitoylated by ZDHHC3. Palmitoylation is regulated by ARF6 and is essential for plasma membrane association and axonal and dendritic filopodia induction. Deacylated by LYPLA2.

The protein resides in the cell membrane. It is found in the cell projection. Its subcellular location is the growth cone membrane. It localises to the synapse. The protein localises to the filopodium membrane. The protein resides in the perikaryon. It is found in the dendrite. Its subcellular location is the axon. It localises to the cytoplasm. In terms of biological role, this protein is associated with nerve growth. It is a major component of the motile 'growth cones' that form the tips of elongating axons. Plays a role in axonal and dendritic filopodia induction. The chain is Neuromodulin (GAP43) from Macaca fascicularis (Crab-eating macaque).